The sequence spans 445 residues: MKHFEANFDGLVGPTHNYAGLSFGNVASLNNAAATSSPKDAAKQGLKKAKALADLGLVQGMLAPQERPDLHTLRRIGFTGTDAAILNKAAKEAPALLRACCSASSMWTANAATVSPSADTHDGKLHFTPANLVDKLHRSIEPITTGNILQATFNDSRYFKHHQHLPEHTSFGDEGAANHTRLCEQYGHAGVELFVYGQETTNPSAPRPQKFPARQTLEASQAVARLHQLDDDCTVYIQQNPDVIDQGVFHNDVIAVGNQNVLFYHEQAFLNTQAKLTEIKRKFGESAIHFVEVPTSKVAIQDAVKSYLFNTQVVTLPSGEMAIIAPTNCQENPAVFAYLNELVTLDTPIKQVLYFDVKQSMQNGGGPACLRLRVAMNQDEVAAVNQHTLMNDAQFTRLNLWVDKHYRDRLLVEDLADPQLLLESRTALDELTQIMKLGSVYQFQR.

Residues 19-28 (AGLSFGNVAS), Asn-110, and 137-138 (HR) contribute to the substrate site. The active site involves Glu-174. Arg-214 lines the substrate pocket. His-250 is a catalytic residue. 2 residues coordinate substrate: Asp-252 and Asn-363. Residue Cys-369 is the Nucleophile of the active site.

This sequence belongs to the succinylarginine dihydrolase family. In terms of assembly, homodimer.

The enzyme catalyses N(2)-succinyl-L-arginine + 2 H2O + 2 H(+) = N(2)-succinyl-L-ornithine + 2 NH4(+) + CO2. It participates in amino-acid degradation; L-arginine degradation via AST pathway; L-glutamate and succinate from L-arginine: step 2/5. Catalyzes the hydrolysis of N(2)-succinylarginine into N(2)-succinylornithine, ammonia and CO(2). This Shewanella halifaxensis (strain HAW-EB4) protein is N-succinylarginine dihydrolase.